A 798-amino-acid chain; its full sequence is Palmitoyl thioesterase CPT1C (798 aa).

At 1-52 (MAEAHQASSLLSSLSSDGAEVELSSPVWQEIYLCALRSWKRHLWRVWNDFLA) the chain is on the cytoplasmic side. The chain crosses the membrane as a helical span at residues 53-75 (GVVPATPLSWLFLFSTIQLACLL). Over 76–103 (QLDPSLGLMEKIKELLPDWGGQHHQLQG) the chain is Lumenal. The helical transmembrane segment at 104 to 126 (FLSAAVFASCLWGALIFTLHVAL) threads the bilayer. At 127–798 (RLLLSHHGWL…PNTPTSSTNL (672 aa)) the chain is on the cytoplasmic side. Histidine 469 functions as the Proton acceptor in the catalytic mechanism. 551-563 (GKSFIKCCHVSSD) is a CoA binding site. (R)-carnitine contacts are provided by tyrosine 585, serine 587, and threonine 598. A required for interaction with GRIA1 region spans residues 759–798 (LFRVGQHFKRQFRGENSDYRYNFLSCKTVDPNTPTSSTNL).

Belongs to the carnitine/choline acetyltransferase family. In terms of assembly, peripherally associated with AMPAR complex. AMPAR complex consists of an inner core made of 4 pore-forming GluA/GRIA proteins (GRIA1, GRIA2, GRIA3 and GRIA4) and 4 major auxiliary subunits arranged in a twofold symmetry. One of the two pairs of distinct binding sites is occupied either by CNIH2, CNIH3 or CACNG2, CACNG3. The other harbors CACNG2, CACNG3, CACNG4, CACNG8 or GSG1L. This inner core of AMPAR complex is complemented by outer core constituents binding directly to the GluA/GRIA proteins at sites distinct from the interaction sites of the inner core constituents. Outer core constituents include at least PRRT1, PRRT2, CKAMP44/SHISA9, FRRS1L and NRN1. The proteins of the inner and outer core serve as a platform for other, more peripherally associated AMPAR constituents, including CPT1C. Alone or in combination, these auxiliary subunits control the gating and pharmacology of the AMPAR complex and profoundly impact their biogenesis and protein processing. Interacts with SACM1L; the interaction regulates SACM1L phosphatidylinositol-3-phosphatase activity and translocation to endoplasmic reticulum/trans Golgi network in a malonyl-CoA dependent manner. Interacts with ATL1. Predominantly expressed in brain (at protein level) and testis, highly expressed in the hippocampus, amygdala and cerebellum. Expressed in neurons but not astrocytes. Expressed in the ventral horn from spinal cords.

The protein localises to the synapse. It is found in the cell projection. Its subcellular location is the axon. It localises to the dendrite. The protein resides in the dendritic spine. The protein localises to the endoplasmic reticulum membrane. The enzyme catalyses S-hexadecanoyl-L-cysteinyl-[protein] + H2O = L-cysteinyl-[protein] + hexadecanoate + H(+). Palmitoyl thioesterase specifically expressed in the endoplasmic reticulum of neurons. Modulates the trafficking of the glutamate receptor, AMPAR, to plasma membrane through depalmitoylation of GRIA1. Also regulates AMPR trafficking through the regulation of SACM1L phosphatidylinositol-3-phosphatase activity by interaction in a malonyl-CoA dependent manner. Binds malonyl-CoA and couples malonyl-CoA to ceramide levels, necessary for proper spine maturation and contributing to systemic energy homeostasis and appetite control. Binds to palmitoyl-CoA, but does not have carnitine palmitoyltransferase 1 catalytic activity or at very low levels. The polypeptide is Palmitoyl thioesterase CPT1C (Cpt1c) (Mus musculus (Mouse)).